Reading from the N-terminus, the 646-residue chain is Lamin-1 (646 aa).

Residues 1-85 (MAEKAGEAGV…GSRATSPTSF (85 aa)) are head. A disordered region spans residues 1-94 (MAEKAGEAGV…FSRAQEKEEL (94 aa)). Composition is skewed to polar residues over residues 48-67 (ATPSSQQSQKSVRTESSMSL) and 75-87 (QGSRATSPTSFSR). The coil 1A stretch occupies residues 86–126 (SRAQEKEELQNLNDRLAKILNKLNDSEEENRTLKIRLTTVQ). The IF rod domain occupies 90–446 (EKEELQNLND…KLLSDEEIRL (357 aa)). The segment at 127–137 (QETSADLNDQI) is linker 1. A coil 1B region spans residues 138–281 (GKYRDELERA…SKLQRQSLSV (144 aa)). The segment covering 281–301 (VTTVDHHSAQSTSRRSGSDFS) has biased composition (polar residues). The disordered stretch occupies residues 281–304 (VTTVDHHSAQSTSRRSGSDFSASV). The interval 282–299 (TTVDHHSAQSTSRRSGSD) is linker 2. The interval 300–439 (FSASVEDMRS…TELEMYNKLL (140 aa)) is coil 2. A tail region spans residues 440–646 (SDEEIRLGIT…GKGILGFFGL (207 aa)). A Nuclear localization signal motif is present at residues 457–471 (VRHGAKKRKLTETFY). Residues 476–487 (GSRSSAGSRSAG) are compositionally biased toward low complexity. The disordered stretch occupies residues 476–513 (GSRSSAGSRSAGHNSTPVTKSQVTRTTVKTSENKSKAS). Over residues 488-505 (HNSTPVTKSQVTRTTVKT) the composition is skewed to polar residues. The LTD domain occupies 504 to 618 (KTSENKSKAS…NQMATYEVSA (115 aa)).

The protein belongs to the intermediate filament family.

The protein localises to the nucleus. Its function is as follows. Intermediate filament (IF) protein, component of the nuclear lamina, a fibrous layer on the nucleoplasmic side of the inner nuclear membrane, which is thought to provide a framework for the nuclear envelope. This chain is Lamin-1, found in Hypsibius exemplaris (Freshwater tardigrade).